Reading from the N-terminus, the 157-residue chain is Methylglyoxal synthase (157 aa).

The region spanning Met-1 to Leu-157 is the MGS-like domain. Substrate-binding positions include His-12, Lys-16, Thr-38–Thr-41, and Ser-71–Gly-72. Catalysis depends on Asp-77, which acts as the Proton donor/acceptor. His-104 lines the substrate pocket.

The protein belongs to the methylglyoxal synthase family.

The enzyme catalyses dihydroxyacetone phosphate = methylglyoxal + phosphate. Its function is as follows. Catalyzes the formation of methylglyoxal from dihydroxyacetone phosphate. The polypeptide is Methylglyoxal synthase (Maridesulfovibrio salexigens (strain ATCC 14822 / DSM 2638 / NCIMB 8403 / VKM B-1763) (Desulfovibrio salexigens)).